The following is a 212-amino-acid chain: Protein RER1C (212 aa).

Met1 is modified (N-acetylmethionine). 4 consecutive transmembrane segments (helical) span residues 55–75, 82–102, 135–155, and 157–177; these read TVPH…IYIV, GFYI…IAFL, EFKF…MTFF, and VFDV…LFFL.

It belongs to the RER1 family.

The protein resides in the membrane. Involved in the retrieval of endoplasmic reticulum membrane proteins from the early Golgi compartment. This is Protein RER1C (RER1C) from Arabidopsis thaliana (Mouse-ear cress).